The primary structure comprises 121 residues: Large ribosomal subunit protein bL12 (121 aa).

This sequence belongs to the bacterial ribosomal protein bL12 family. In terms of assembly, homodimer. Part of the ribosomal stalk of the 50S ribosomal subunit. Forms a multimeric L10(L12)X complex, where L10 forms an elongated spine to which 2 to 4 L12 dimers bind in a sequential fashion. Binds GTP-bound translation factors.

Functionally, forms part of the ribosomal stalk which helps the ribosome interact with GTP-bound translation factors. Is thus essential for accurate translation. The sequence is that of Large ribosomal subunit protein bL12 from Mesomycoplasma hyopneumoniae (strain 232) (Mycoplasma hyopneumoniae).